A 339-amino-acid chain; its full sequence is 2,3,4,5-tetrahydropyridine-2,6-dicarboxylate N-succinyltransferase (339 aa).

Asp180 lines the Mg(2+) pocket. Catalysis depends on Glu213, which acts as the Acyl-anhydride intermediate. Succinyl-CoA contacts are provided by residues Arg215, Gly230, Ser233, Ala256, 271–272 (EA), Gly279, and Lys300.

The protein belongs to the type 2 tetrahydrodipicolinate N-succinyltransferase family. As to quaternary structure, homotrimer.

The protein localises to the cytoplasm. The enzyme catalyses (S)-2,3,4,5-tetrahydrodipicolinate + succinyl-CoA + H2O = (S)-2-succinylamino-6-oxoheptanedioate + CoA. It functions in the pathway amino-acid biosynthesis; L-lysine biosynthesis via DAP pathway; LL-2,6-diaminopimelate from (S)-tetrahydrodipicolinate (succinylase route): step 1/3. In terms of biological role, catalyzes the conversion of the cyclic tetrahydrodipicolinate (THDP) into the acyclic N-succinyl-L-2-amino-6-oxopimelate using succinyl-CoA. This chain is 2,3,4,5-tetrahydropyridine-2,6-dicarboxylate N-succinyltransferase, found in Bifidobacterium longum (strain NCC 2705).